A 71-amino-acid polypeptide reads, in one-letter code: Translation initiation factor IF-1 (71 aa).

In terms of domain architecture, S1-like spans 1-71; sequence MSKDDLIQFT…LTKGRVIHRH (71 aa).

It belongs to the IF-1 family. As to quaternary structure, component of the 30S ribosomal translation pre-initiation complex which assembles on the 30S ribosome in the order IF-2 and IF-3, IF-1 and N-formylmethionyl-tRNA(fMet); mRNA recruitment can occur at any time during PIC assembly.

It localises to the cytoplasm. One of the essential components for the initiation of protein synthesis. Stabilizes the binding of IF-2 and IF-3 on the 30S subunit to which N-formylmethionyl-tRNA(fMet) subsequently binds. Helps modulate mRNA selection, yielding the 30S pre-initiation complex (PIC). Upon addition of the 50S ribosomal subunit IF-1, IF-2 and IF-3 are released leaving the mature 70S translation initiation complex. The protein is Translation initiation factor IF-1 of Rickettsia canadensis (strain McKiel).